A 352-amino-acid polypeptide reads, in one-letter code: Glucose-6-phosphatase catalytic subunit 1 (352 aa).

The Lumenal segment spans residues 1-27 (MDLLHSWGVELAVYLQTRYGKYEGLFD). Residues 28–48 (LASTVADLHTTFFWLFPIWFH) traverse the membrane as a helical segment. At 49-56 (LRRDTALR) the chain is on the cytoplasmic side. The helical transmembrane segment at 57–77 (LIWVAVIGDWLNLVLKWVLFG) threads the bilayer. At 78–113 (ERPYWWVHETKFYGAGPAPSLQQFPITCETGPGSPS) the chain is on the lumenal side. Arg-79 is a substrate binding site. The chain crosses the membrane as a helical span at residues 114–134 (GHAMGAAGVWYVMVTALLSIA). The active-site Proton donor is the His-115. The Cytoplasmic portion of the chain corresponds to 135 to 141 (REKQCPP). A helical membrane pass occupies residues 142–162 (LLYRFLYIGLWMLMGLVELVV). At 163–166 (CISR) the chain is on the lumenal side. Arg-166 provides a ligand contact to substrate. Residues 167 to 187 (VYMAAHFPHQVIAGIITGTLV) traverse the membrane as a helical segment. His-172 (nucleophile) is an active-site residue. The Cytoplasmic segment spans residues 188–205 (AEVVSKEKWIYSASLKKY). A helical transmembrane segment spans residues 206–226 (FLITLFLTSFAVGFYVLLKAL). The Lumenal segment spans residues 227–256 (DVDLLWTMEKAQKWCIRPEWVHLDSAPFAS). The chain crosses the membrane as a helical span at residues 257 to 276 (LLRNMGSLFGLGLGLHSPFY). Residues 277–289 (KTTKMRIMSAPLR) lie on the Cytoplasmic side of the membrane. Residues 290–310 (IGCIVISVSLLHLLDGWTFSP) form a helical membrane-spanning segment. Topologically, residues 311-324 (ENHMTFYALSFGKS) are lumenal. The chain crosses the membrane as a helical span at residues 325 to 345 (AVALLIPTTLVPWALSKIYPV). Over 346-352 (KTEGKNL) the chain is Cytoplasmic. The short motif at 349–352 (GKNL) is the Prevents secretion from ER element.

The protein belongs to the glucose-6-phosphatase family.

Its subcellular location is the endoplasmic reticulum membrane. The catalysed reaction is D-glucose 6-phosphate + H2O = D-glucose + phosphate. It participates in carbohydrate biosynthesis; gluconeogenesis. Hydrolyzes glucose-6-phosphate to glucose in the endoplasmic reticulum. Forms with the glucose-6-phosphate transporter (SLC37A4/G6PT) the complex responsible for glucose production in the terminal step of glycogenolysis and gluconeogenesis. Hence, it is the key enzyme in homeostatic regulation of blood glucose levels. The sequence is that of Glucose-6-phosphatase catalytic subunit 1 (g6pc1) from Haplochromis nubilus (Blue Victoria mouthbrooder).